A 360-amino-acid polypeptide reads, in one-letter code: Phospho-N-acetylmuramoyl-pentapeptide-transferase (360 aa).

10 helical membrane passes run Arg-24–Ile-44, Gly-69–Trp-89, Trp-92–Phe-112, Met-133–Asn-153, Ile-158–Val-178, Gly-199–Ser-219, Val-239–Tyr-259, Val-263–Ile-283, Phe-288–Val-308, and Gln-337–Leu-357.

The protein belongs to the glycosyltransferase 4 family. MraY subfamily. Requires Mg(2+) as cofactor.

It is found in the cell inner membrane. The catalysed reaction is UDP-N-acetyl-alpha-D-muramoyl-L-alanyl-gamma-D-glutamyl-meso-2,6-diaminopimeloyl-D-alanyl-D-alanine + di-trans,octa-cis-undecaprenyl phosphate = di-trans,octa-cis-undecaprenyl diphospho-N-acetyl-alpha-D-muramoyl-L-alanyl-D-glutamyl-meso-2,6-diaminopimeloyl-D-alanyl-D-alanine + UMP. Its pathway is cell wall biogenesis; peptidoglycan biosynthesis. Its function is as follows. Catalyzes the initial step of the lipid cycle reactions in the biosynthesis of the cell wall peptidoglycan: transfers peptidoglycan precursor phospho-MurNAc-pentapeptide from UDP-MurNAc-pentapeptide onto the lipid carrier undecaprenyl phosphate, yielding undecaprenyl-pyrophosphoryl-MurNAc-pentapeptide, known as lipid I. This Neisseria gonorrhoeae (strain ATCC 700825 / FA 1090) protein is Phospho-N-acetylmuramoyl-pentapeptide-transferase.